Here is a 304-residue protein sequence, read N- to C-terminus: Beta-lactamase-like protein str6 (304 aa).

It belongs to the beta-lactamase family.

The protein operates within mycotoxin biosynthesis. Its function is as follows. Beta-lactamase-like protein; part of the gene cluster that mediates the biosynthesis of strobilurin A, an antifungal polyketide that contains a key beta-methoxyacrylate toxophore that targets the complex III of the mitochondrial electron transport chain. Strobilurin biosynthesis begins with construction of benzoyl CoA by step-wise elimination of ammonia from phenylalanine by the phenylalanine ammonia-lyase str11, oxygenation by str8 and retro-Claisen reaction to form benzoic acid, which is activated to its CoA thiolester benzoyl CoA by the dedicated CoA ligase str10. Benzoyl CoA forms the starter unit for the highly reducing polyketide synthase stpks1 that produces the polyketide prestrobilutin A. The FAD-dependent oxygenase str9 then catalyzes the key oxidative rearrangement responsible for the creation of the beta-methoxyacrylate toxophore. Str9 performs epoxidation of the 2,3 olefin of prestrobilutin A, followed by Meinwald rearrangement to furnish the aldehyde intermediate. Rapid enolization of the aldehyde intermediate would give the beta-methoxyacrylate skeleton and methylations catalyzed by str2 and str3 complete the synthesis and lead to the production of strobilurin A. The short-chain dehydrogenase stl2 and the dehydrogenase str4 play a role in the shunt pathway leading to the production of bolineol. The cluster encodes no obvious halogenase gene that could be involved in production of strobilurin B, nor any obvious dimethylallyl-transferase that could be involved in the production of strobilurin G. It is possible that unknown proteins encoded in, or near, the cluster (such as str1 or stl1) may form new classes of halogenases or dimethylally-transferases, or that the responsible genes are located elsewhere on the genome. Similarly, proteins encoded by str5/str6 hydrolases appear to have no chemical role in the biosynthesis of strobilurin A. Finally, no obvious self-resistance gene is found within the cluster. This is Beta-lactamase-like protein str6 from Strobilurus tenacellus.